The chain runs to 95 residues: Aspartyl/glutamyl-tRNA(Asn/Gln) amidotransferase subunit C (95 aa).

Belongs to the GatC family. In terms of assembly, heterotrimer of A, B and C subunits.

It catalyses the reaction L-glutamyl-tRNA(Gln) + L-glutamine + ATP + H2O = L-glutaminyl-tRNA(Gln) + L-glutamate + ADP + phosphate + H(+). The enzyme catalyses L-aspartyl-tRNA(Asn) + L-glutamine + ATP + H2O = L-asparaginyl-tRNA(Asn) + L-glutamate + ADP + phosphate + 2 H(+). Allows the formation of correctly charged Asn-tRNA(Asn) or Gln-tRNA(Gln) through the transamidation of misacylated Asp-tRNA(Asn) or Glu-tRNA(Gln) in organisms which lack either or both of asparaginyl-tRNA or glutaminyl-tRNA synthetases. The reaction takes place in the presence of glutamine and ATP through an activated phospho-Asp-tRNA(Asn) or phospho-Glu-tRNA(Gln). The protein is Aspartyl/glutamyl-tRNA(Asn/Gln) amidotransferase subunit C of Pelagibacter ubique (strain HTCC1062).